A 499-amino-acid chain; its full sequence is Hexokinase-2, chloroplastic (499 aa).

A chloroplast-targeting transit peptide spans 1–30 (MSVTVSSPAGRSFHISRSPYKKISKPRVII). The Hexokinase domain maps to 39–490 (LAVAPILTKL…SGIGAALLAA (452 aa)). The segment at 94–232 (TGNEKGLFYA…GLGMQVSALV (139 aa)) is hexokinase small subdomain. ADP contacts are provided by glycine 108, threonine 109, and asparagine 110. Positions 198, 199, 233, and 234 each coordinate D-glucose. Residues 233 to 479 (NDTVATLAGA…KNVVIEHSKD (247 aa)) form a hexokinase large subdomain region. Threonine 257 is an ADP binding site. 3 residues coordinate D-glucose: asparagine 260, glutamate 288, and glutamate 318. Glycine 444 contributes to the ADP binding site.

It belongs to the hexokinase family. As to expression, expressed in vascular starch sheath, xylem parenchyma, guard cells and root tips.

The protein resides in the plastid. It is found in the chloroplast stroma. The catalysed reaction is a D-hexose + ATP = a D-hexose 6-phosphate + ADP + H(+). The enzyme catalyses D-fructose + ATP = D-fructose 6-phosphate + ADP + H(+). It catalyses the reaction D-glucose + ATP = D-glucose 6-phosphate + ADP + H(+). The protein operates within carbohydrate metabolism; hexose metabolism. It functions in the pathway carbohydrate degradation; glycolysis; D-glyceraldehyde 3-phosphate and glycerone phosphate from D-glucose: step 1/4. In terms of biological role, fructose and glucose phosphorylating enzyme. In Nicotiana tabacum (Common tobacco), this protein is Hexokinase-2, chloroplastic (HXK2).